The primary structure comprises 348 residues: MAVALGPSGWWQRWRRRLSAREVSRMLLLLLLLGSGQGPRQVGAGQTFEYLKREHSLSKPYQGVGTSSSSLWNLMGNAMVMTQYIRLTPDMQSKQGALWNRVPCFLRDWELQVHFRIHGQGKKNLHGDGLAIWYTKDRMQPGPVFGNMDKFVGLGVFVDTYPNEEKQQERVFPYISAMVNNGSLSYDHERDGRPTELGGCTAIVRNLHYDTFLVIRYVKRHLTIMMDIDGKHEWRDCIEVPGVRLPRGYYFGTSSITGDLSDNHDVISLKLFELTVERTPEEEKLHRDVFLPSVDNMKLPEMTAPLPPLSGLALFLIVFFSLVFSVFAIVIGIILYNKWQDQSRKRFY.

The first 38 residues, 1–38, serve as a signal peptide directing secretion; that stretch reads MAVALGPSGWWQRWRRRLSAREVSRMLLLLLLLGSGQG. Residues 39 to 313 lie on the Lumenal side of the membrane; that stretch reads PRQVGAGQTF…APLPPLSGLA (275 aa). The region spanning 49-274 is the L-type lectin-like domain; it reads EYLKREHSLS…DVISLKLFEL (226 aa). Positions 93 and 128 each coordinate a carbohydrate. Residues aspartate 159, tyrosine 161, and asparagine 163 each coordinate Ca(2+). 2 residues coordinate a carbohydrate: tyrosine 161 and asparagine 163. Asparagine 181 carries an N-linked (GlcNAc...) asparagine glycan. Histidine 188 lines the a carbohydrate pocket. Aspartate 191 lines the Ca(2+) pocket. Cysteines 200 and 237 form a disulfide. 258–260 contributes to the a carbohydrate binding site; the sequence is GDL. The chain crosses the membrane as a helical span at residues 314–334; it reads LFLIVFFSLVFSVFAIVIGII. Over 335–348 the chain is Cytoplasmic; sequence LYNKWQDQSRKRFY. The Endoplasmic reticulum retention signal signature appears at 344 to 346; that stretch reads RKR.

The protein resides in the endoplasmic reticulum membrane. Its subcellular location is the golgi apparatus membrane. Its function is as follows. May be involved in the regulation of export from the endoplasmic reticulum of a subset of glycoproteins. May function as a regulator of ERGIC-53. This is VIP36-like protein (LMAN2L) from Bos taurus (Bovine).